The sequence spans 603 residues: UvrABC system protein C (603 aa).

A GIY-YIG domain is found at 15–92; sequence DQPGCYLMKD…IKKHDPRFNI (78 aa). In terms of domain architecture, UVR spans 197-232; the sequence is KTVKNDLMKKMQEAAENMEFEKAGEFRDQINAIETT.

This sequence belongs to the UvrC family. Interacts with UvrB in an incision complex.

The protein localises to the cytoplasm. In terms of biological role, the UvrABC repair system catalyzes the recognition and processing of DNA lesions. UvrC both incises the 5' and 3' sides of the lesion. The N-terminal half is responsible for the 3' incision and the C-terminal half is responsible for the 5' incision. The protein is UvrABC system protein C of Listeria monocytogenes serovar 1/2a (strain ATCC BAA-679 / EGD-e).